A 370-amino-acid chain; its full sequence is Chorismate synthase (370 aa).

The tract at residues 41-60 is disordered; the sequence is IQGDLDRRKPGTSRHVTQRK. Positions 48 and 54 each coordinate NADP(+). Residues 125–127, 238–239, glycine 278, 293–297, and arginine 319 contribute to the FMN site; these read RSS, NA, and KPTSS.

This sequence belongs to the chorismate synthase family. As to quaternary structure, homotetramer. FMNH2 is required as a cofactor.

The catalysed reaction is 5-O-(1-carboxyvinyl)-3-phosphoshikimate = chorismate + phosphate. Its pathway is metabolic intermediate biosynthesis; chorismate biosynthesis; chorismate from D-erythrose 4-phosphate and phosphoenolpyruvate: step 7/7. Its function is as follows. Catalyzes the anti-1,4-elimination of the C-3 phosphate and the C-6 proR hydrogen from 5-enolpyruvylshikimate-3-phosphate (EPSP) to yield chorismate, which is the branch point compound that serves as the starting substrate for the three terminal pathways of aromatic amino acid biosynthesis. This reaction introduces a second double bond into the aromatic ring system. This is Chorismate synthase from Cupriavidus pinatubonensis (strain JMP 134 / LMG 1197) (Cupriavidus necator (strain JMP 134)).